Consider the following 666-residue polypeptide: TATA box-binding protein-associated factor RNA polymerase I subunit B (666 aa).

The RRN7-type zinc finger occupies 1-29; the sequence is MICTECENDAFDEEDDGYYYCQRCGVQVE. Positions 3, 6, 21, and 24 each coordinate Zn(2+). Positions 30–64 are B-reader; it reads NLIQTGVDDGDLIGEGGGTQGALYNPKHRRTEPQP. 2 disordered regions span residues 45–110 and 189–208; these read GGGT…VDKE and DSEH…LKRH. The segment at 65 to 80 is B-linker; it reads ITPSQPRFTDDTSRYS. A compositionally biased stretch (polar residues) spans 78-89; it reads RYSQFKSQFESE. An N-terminal cyclin fold region spans residues 81-285; it reads QFKSQFESEN…REQMGERSAA (205 aa). 2 stretches are compositionally biased toward basic and acidic residues: residues 90-110 and 189-202; these read NGNK…VDKE and DSEH…VKDA. A C-terminal cyclin fold region spans residues 286-288; that stretch reads CPV. The interval 515–548 is disordered; it reads SDGNNPCSSSSRRNESVSIGLDLSSSEHRESSSP. Basic and acidic residues predominate over residues 539 to 548; it reads SSEHRESSSP.

The protein belongs to the RRN7/TAF1B family. Interacts with TFIIF. Interacts with MEE14/CBP1, TBP1 and NRPB1 (via CTD). Expressed at high levels in seedlings, inflorescences and young siliques and at lower levels in roots. Not detected in leaves and stems. Detected in root tips and shoot apical meristems, in anthers, primarily in microspores with weaker expression in mature pollen grains and in the central cell of the mature female gametophyte. Not expressed in synergids, egg cells, antipodal cells, endosperm cells and fertilized egg cells.

The protein resides in the nucleus. It is found in the nucleolus. Functionally, component of RNA polymerase I core factor complex that acts as a GTF2B/TFIIB-like factor and plays a key role in multiple steps during transcription initiation such as pre-initiation complex (PIC) assembly and postpolymerase recruitment events in polymerase I (Pol I) transcription. Binds rDNA promoters and plays a role in Pol I recruitment. Required for the development of the one-cell zygote and endosperm in embryos. Required for micropylar pollen tube guidance, but has no effect on ovule development and gametophytic cell fate specification. May regulate the transcription of secreted cysteine-rich peptide (CRP) genes in the embryo sac. In Arabidopsis thaliana (Mouse-ear cress), this protein is TATA box-binding protein-associated factor RNA polymerase I subunit B.